The primary structure comprises 217 residues: Protein LURP-one-related 15 (217 aa).

The residue at position 1 (Met-1) is an N-acetylmethionine.

This sequence belongs to the LOR family.

Its function is as follows. Might be related to the phospholipid scramblase and tubby-like superfamily of membrane tethered transcription factors. The chain is Protein LURP-one-related 15 from Arabidopsis thaliana (Mouse-ear cress).